A 487-amino-acid polypeptide reads, in one-letter code: E3 ubiquitin-protein ligase RNF8 (487 aa).

In terms of domain architecture, FHA spans 38–92; the sequence is VTVGRGFGVTYQLVSKICPLMISRNHCILKQNAEGQWTIKDNKSLNGVWLNRERL. The segment at 68–72 is required for interaction with PIWIL1; that stretch reads QNAEG. 2 disordered regions span residues 143–176 and 182–201; these read MMEKNKGLRTKRKFSLDELEGSGAEGPSNLKSKI and EPGQQVKSHGKGKVASQPSE. S157 bears the Phosphoserine mark. The RING-type zinc finger occupies 405–443; sequence CIICSEYFVEAVTLNCAHSFCSYCINEWMKRKVECPICR.

It belongs to the RNF8 family. Homodimer. Forms a E2-E3 ubiquitin ligase complex composed of the RNF8 homodimer and a E2 heterodimer of UBE2N and UBE2V2. Interacts with class III E2s, including UBE2E1, UBE2E2, and UBE2E3 and with UBE2N. Interacts with RXRA. Interacts (via FHA domain) with phosphorylated HERC2 (via C-terminus). Interacts with PIWIL1; leading to sequester RNF8 in the cytoplasm. Interacts with WRAP53/TCAB1. In terms of processing, autoubiquitinated through 'Lys-48' and 'Lys-63' of ubiquitin. 'Lys-63' polyubiquitination is mediated by UBE2N. 'Lys-29'-type polyubiquitination is also observed, but it doesn't require its own functional RING-type zinc finger.

The protein localises to the nucleus. The protein resides in the cytoplasm. It localises to the midbody. Its subcellular location is the chromosome. It is found in the telomere. It catalyses the reaction S-ubiquitinyl-[E2 ubiquitin-conjugating enzyme]-L-cysteine + [acceptor protein]-L-lysine = [E2 ubiquitin-conjugating enzyme]-L-cysteine + N(6)-ubiquitinyl-[acceptor protein]-L-lysine.. Its pathway is protein modification; protein ubiquitination. Functionally, E3 ubiquitin-protein ligase that plays a key role in DNA damage signaling via 2 distinct roles: by mediating the 'Lys-63'-linked ubiquitination of histones H2A and H2AX and promoting the recruitment of DNA repair proteins at double-strand breaks (DSBs) sites, and by catalyzing 'Lys-48'-linked ubiquitination to remove target proteins from DNA damage sites. Following DNA DSBs, it is recruited to the sites of damage by ATM-phosphorylated MDC1 and catalyzes the 'Lys-63'-linked ubiquitination of histones H2A and H2AX, thereby promoting the formation of TP53BP1 and BRCA1 ionizing radiation-induced foci (IRIF). Also controls the recruitment of UIMC1-BRCC3 (RAP80-BRCC36) and PAXIP1/PTIP to DNA damage sites. Promotes the recruitment of NBN to DNA damage sites by catalyzing 'Lys-6'-linked ubiquitination of NBN. Also recruited at DNA interstrand cross-links (ICLs) sites and catalyzes 'Lys-63'-linked ubiquitination of histones H2A and H2AX, leading to recruitment of FAAP20 and Fanconi anemia (FA) complex, followed by interstrand cross-link repair. H2A ubiquitination also mediates the ATM-dependent transcriptional silencing at regions flanking DSBs in cis, a mechanism to avoid collision between transcription and repair intermediates. Promotes the formation of 'Lys-63'-linked polyubiquitin chains via interactions with the specific ubiquitin-conjugating UBE2N/UBC13 and ubiquitinates non-histone substrates such as PCNA. Substrates that are polyubiquitinated at 'Lys-63' are usually not targeted for degradation. Also catalyzes the formation of 'Lys-48'-linked polyubiquitin chains via interaction with the ubiquitin-conjugating UBE2L6/UBCH8, leading to degradation of substrate proteins such as CHEK2, JMJD2A/KDM4A and KU80/XRCC5: it is still unclear how the preference toward 'Lys-48'- versus 'Lys-63'-linked ubiquitination is regulated but it could be due to RNF8 ability to interact with specific E2 specific ligases. For instance, interaction with phosphorylated HERC2 promotes the association between RNF8 and UBE2N/UBC13 and favors the specific formation of 'Lys-63'-linked ubiquitin chains. Promotes non-homologous end joining (NHEJ) by promoting the 'Lys-48'-linked ubiquitination and degradation the of KU80/XRCC5. Following DNA damage, mediates the ubiquitination and degradation of JMJD2A/KDM4A in collaboration with RNF168, leading to unmask H4K20me2 mark and promote the recruitment of TP53BP1 at DNA damage sites. Following DNA damage, mediates the ubiquitination and degradation of POLD4/p12, a subunit of DNA polymerase delta. In the absence of POLD4, DNA polymerase delta complex exhibits higher proofreading activity. In addition to its function in damage signaling, also plays a role in higher-order chromatin structure by mediating extensive chromatin decondensation. Involved in the activation of ATM by promoting histone H2B ubiquitination, which indirectly triggers histone H4 'Lys-16' acetylation (H4K16ac), establishing a chromatin environment that promotes efficient activation of ATM kinase. Required in the testis, where it plays a role in the replacement of histones during spermatogenesis. At uncapped telomeres, promotes the joining of deprotected chromosome ends by inducing H2A ubiquitination and TP53BP1 recruitment, suggesting that it may enhance cancer development by aggravating telomere-induced genome instability in case of telomeric crisis. Promotes the assembly of RAD51 at DNA DSBs in the absence of BRCA1 and TP53BP1 Also involved in class switch recombination in immune system, via its role in regulation of DSBs repair. May be required for proper exit from mitosis after spindle checkpoint activation and may regulate cytokinesis. May play a role in the regulation of RXRA-mediated transcriptional activity. Not involved in RXRA ubiquitination by UBE2E2. This is E3 ubiquitin-protein ligase RNF8 from Bos taurus (Bovine).